Reading from the N-terminus, the 570-residue chain is Sulfite reductase [NADPH] hemoprotein beta-component (570 aa).

[4Fe-4S] cluster contacts are provided by C434, C440, C479, and C483. C483 lines the siroheme pocket.

Belongs to the nitrite and sulfite reductase 4Fe-4S domain family. In terms of assembly, alpha(8)-beta(8). The alpha component is a flavoprotein, the beta component is a hemoprotein. Siroheme is required as a cofactor. [4Fe-4S] cluster serves as cofactor.

The enzyme catalyses hydrogen sulfide + 3 NADP(+) + 3 H2O = sulfite + 3 NADPH + 4 H(+). Its pathway is sulfur metabolism; hydrogen sulfide biosynthesis; hydrogen sulfide from sulfite (NADPH route): step 1/1. Its function is as follows. Component of the sulfite reductase complex that catalyzes the 6-electron reduction of sulfite to sulfide. This is one of several activities required for the biosynthesis of L-cysteine from sulfate. This Salmonella newport (strain SL254) protein is Sulfite reductase [NADPH] hemoprotein beta-component.